A 587-amino-acid chain; its full sequence is Kelch-like protein 3 (587 aa).

The tract at residues 1–24 (MEGESVKPSPQPTAQAEDEEKNRR) is disordered. In terms of domain architecture, BTB spans 50–117 (CDVMIVAEDV…IYTAEIEVTE (68 aa)). Positions 152–254 (CLGIRAFADV…PRDYLVQTVE (103 aa)) constitute a BACK domain. Position 295 is a phosphothreonine (threonine 295). Kelch repeat units follow at residues 302–347 (VMIV…FMAG), 348–394 (HVYA…VLND), 396–441 (LYAV…VVEG), 442–490 (KLYA…VLSG), 491–537 (QLYA…AVNG), and 539–585 (LYVV…VIHK). Threonine 375 carries the phosphothreonine modification. Serine 376 and serine 433 each carry phosphoserine.

This sequence belongs to the KLHL3 family. Homodimer. Component of the BCR(KLHL3) E3 ubiquitin ligase complex, at least composed of CUL3 and KLHL3 and RBX1. Interacts with CLDN8. Phosphorylation at Ser-433 by PKA or PKC decreases the interaction with WNK1 and WNK4, leading to inhibit their degradation by the BCR(KLHL3) complex. Phosphorylated at Ser-433 by PKC in response to angiotensin II signaling, decreasing ability to promote degradation of WNK1 and WNK4, leading to activation of Na-Cl cotransporter SLC12A3/NCC. Phosphorylation at Ser-433 is increased by insulin. Dephosphorylated at Ser-433 by calcineurin PPP3CA, promoting degradation of WNK1 and WNK4. In terms of tissue distribution, present at high level in brain and kidney (at protein level). Weakly expressed in other tissues. In kidney, predominantly localizes to the distal convoluted tubule (DCT) and collecting duct, with apical localization in the DCT (at protein level).

The protein localises to the cytoplasm. Its subcellular location is the cytosol. The protein resides in the cytoskeleton. Its pathway is protein modification; protein ubiquitination. Functionally, substrate-specific adapter of a BCR (BTB-CUL3-RBX1) E3 ubiquitin ligase complex that acts as a regulator of ion transport in the distal nephron. The BCR(KLHL3) complex acts by mediating ubiquitination and degradation of WNK1 and WNK4, two activators of Na-Cl cotransporter SLC12A3/NCC in distal convoluted tubule cells of kidney, thereby regulating NaCl reabsorption. The BCR(KLHL3) complex also mediates ubiquitination of CLDN8, a tight-junction protein required for paracellular chloride transport in the kidney, leading to its degradation. In Mus musculus (Mouse), this protein is Kelch-like protein 3.